The chain runs to 380 residues: Chaperone protein DnaJ (380 aa).

The 66-residue stretch at 5–70 (DYYEVLGVSK…QKRQTYDQYG (66 aa)) folds into the J domain. The segment at 136–214 (GKEVEIKIPT…CHGQGRVEKT (79 aa)) adopts a CR-type zinc-finger fold. Zn(2+)-binding residues include C149, C152, C166, C169, C188, C191, C202, and C205. CXXCXGXG motif repeat units follow at residues 149 to 156 (CDPCDGSG), 166 to 173 (CTTCHGAG), 188 to 195 (CPTCQGQG), and 202 to 209 (CDSCHGQG).

It belongs to the DnaJ family. As to quaternary structure, homodimer. Zn(2+) serves as cofactor.

It is found in the cytoplasm. In terms of biological role, participates actively in the response to hyperosmotic and heat shock by preventing the aggregation of stress-denatured proteins and by disaggregating proteins, also in an autonomous, DnaK-independent fashion. Unfolded proteins bind initially to DnaJ; upon interaction with the DnaJ-bound protein, DnaK hydrolyzes its bound ATP, resulting in the formation of a stable complex. GrpE releases ADP from DnaK; ATP binding to DnaK triggers the release of the substrate protein, thus completing the reaction cycle. Several rounds of ATP-dependent interactions between DnaJ, DnaK and GrpE are required for fully efficient folding. Also involved, together with DnaK and GrpE, in the DNA replication of plasmids through activation of initiation proteins. The chain is Chaperone protein DnaJ from Pseudoalteromonas translucida (strain TAC 125).